Consider the following 230-residue polypeptide: A-type ATP synthase subunit D (230 aa).

The disordered stretch occupies residues 204–230 (AKKEEEEDALAAEEEAEEEPEAVTADD). A compositionally biased stretch (acidic residues) spans 208 to 230 (EEEDALAAEEEAEEEPEAVTADD).

This sequence belongs to the V-ATPase D subunit family. As to quaternary structure, has multiple subunits with at least A(3), B(3), C, D, E, F, H, I and proteolipid K(x).

It localises to the cell membrane. Its function is as follows. Component of the A-type ATP synthase that produces ATP from ADP in the presence of a proton gradient across the membrane. In Haloarcula marismortui (strain ATCC 43049 / DSM 3752 / JCM 8966 / VKM B-1809) (Halobacterium marismortui), this protein is A-type ATP synthase subunit D.